Reading from the N-terminus, the 136-residue chain is uncharacterized protein (136 aa).

Positions 1-19 are cleaved as a signal peptide; it reads MKKLLMVILGIALIGMAYA.

This is an uncharacterized protein from Methanocaldococcus jannaschii (strain ATCC 43067 / DSM 2661 / JAL-1 / JCM 10045 / NBRC 100440) (Methanococcus jannaschii).